A 42-amino-acid polypeptide reads, in one-letter code: Photosystem I reaction center subunit IX (42 aa).

The helical transmembrane segment at 7 to 27 (YLSTAPVLATLWFGFLAGLLI) threads the bilayer.

This sequence belongs to the PsaJ family.

Its subcellular location is the plastid. It localises to the chloroplast thylakoid membrane. Its function is as follows. May help in the organization of the PsaE and PsaF subunits. The polypeptide is Photosystem I reaction center subunit IX (Marchantia polymorpha (Common liverwort)).